Here is a 327-residue protein sequence, read N- to C-terminus: Pyruvate dehydrogenase E1 component subunit beta (327 aa).

Residue Glu-63 participates in thiamine diphosphate binding.

As to quaternary structure, heterodimer of an alpha and a beta chain. Thiamine diphosphate serves as cofactor.

The enzyme catalyses N(6)-[(R)-lipoyl]-L-lysyl-[protein] + pyruvate + H(+) = N(6)-[(R)-S(8)-acetyldihydrolipoyl]-L-lysyl-[protein] + CO2. In terms of biological role, the pyruvate dehydrogenase complex catalyzes the overall conversion of pyruvate to acetyl-CoA and CO(2). It contains multiple copies of three enzymatic components: pyruvate dehydrogenase (E1), dihydrolipoamide acetyltransferase (E2) and lipoamide dehydrogenase (E3). In Mycoplasma pneumoniae (strain ATCC 29342 / M129 / Subtype 1) (Mycoplasmoides pneumoniae), this protein is Pyruvate dehydrogenase E1 component subunit beta (pdhB).